We begin with the raw amino-acid sequence, 636 residues long: uncharacterized protein (636 aa).

Helical transmembrane passes span 12-32 (AVIY…FGSI), 34-54 (IMHL…TTTG), and 75-95 (IGAG…FMSF). Residues 112 to 231 (KNHFILCGFG…KKAGANRIIS (120 aa)) form the RCK N-terminal domain.

The protein localises to the cell membrane. This is an uncharacterized protein from Methanothermus fervidus (strain ATCC 43054 / DSM 2088 / JCM 10308 / V24 S).